Consider the following 294-residue polypeptide: Signal peptidase I (294 aa).

The segment at M1–P59 is disordered. The Cytoplasmic portion of the chain corresponds to M1–R66. Residues G47–P59 show a composition bias toward basic and acidic residues. The chain crosses the membrane as a helical span at residues E67 to A87. At R88 to R294 the chain is on the extracellular side. Residues S96 and K174 contribute to the active site.

This sequence belongs to the peptidase S26 family.

It is found in the cell membrane. The catalysed reaction is Cleavage of hydrophobic, N-terminal signal or leader sequences from secreted and periplasmic proteins.. This Mycobacterium tuberculosis (strain CDC 1551 / Oshkosh) protein is Signal peptidase I (lepB).